The primary structure comprises 275 residues: Large ribosomal subunit protein uL2c (275 aa).

Disordered stretches follow at residues 1–30 (MAIH…QKQK) and 225–275 (MNPV…RRRK). A compositionally biased stretch (polar residues) spans 21–30 (QAKSTPQKQK).

It belongs to the universal ribosomal protein uL2 family. In terms of assembly, part of the 50S ribosomal subunit.

Its subcellular location is the plastid. The protein localises to the chloroplast. The polypeptide is Large ribosomal subunit protein uL2c (rpl2) (Illicium oligandrum (Star anise)).